We begin with the raw amino-acid sequence, 300 residues long: Mycothiol acetyltransferase (300 aa).

N-acetyltransferase domains follow at residues 4 to 140 (IDWR…RPLT) and 151 to 300 (VRLA…AVAD). A 1D-myo-inositol 2-(L-cysteinylamino)-2-deoxy-alpha-D-glucopyranoside-binding site is contributed by D36. Residue 79–81 (LVV) participates in acetyl-CoA binding. Residues E178, K219, and E227 each coordinate 1D-myo-inositol 2-(L-cysteinylamino)-2-deoxy-alpha-D-glucopyranoside. 231 to 233 (VGV) lines the acetyl-CoA pocket. Position 269 (Y269) interacts with 1D-myo-inositol 2-(L-cysteinylamino)-2-deoxy-alpha-D-glucopyranoside. 274 to 279 (NGAAVK) contributes to the acetyl-CoA binding site.

It belongs to the acetyltransferase family. MshD subfamily. As to quaternary structure, monomer.

The enzyme catalyses 1D-myo-inositol 2-(L-cysteinylamino)-2-deoxy-alpha-D-glucopyranoside + acetyl-CoA = mycothiol + CoA + H(+). Its function is as follows. Catalyzes the transfer of acetyl from acetyl-CoA to desacetylmycothiol (Cys-GlcN-Ins) to form mycothiol. The chain is Mycothiol acetyltransferase from Mycobacterium sp. (strain JLS).